The following is a 193-amino-acid chain: Probable GTP-binding protein EngB (193 aa).

One can recognise an EngB-type G domain in the interval 22–193 (GLPEFAFAGR…LIAVLESYLA (172 aa)). GTP is bound by residues 30–37 (GRSNVGKS), 57–61 (GKTQG), 75–78 (DLPG), 142–145 (TKID), and 173–175 (FSS). Residues Ser37 and Thr59 each coordinate Mg(2+).

It belongs to the TRAFAC class TrmE-Era-EngA-EngB-Septin-like GTPase superfamily. EngB GTPase family. Mg(2+) is required as a cofactor.

Functionally, necessary for normal cell division and for the maintenance of normal septation. In Desulfotalea psychrophila (strain LSv54 / DSM 12343), this protein is Probable GTP-binding protein EngB.